A 310-amino-acid polypeptide reads, in one-letter code: Aspartate carbamoyltransferase catalytic subunit (310 aa).

Arginine 58 and threonine 59 together coordinate carbamoyl phosphate. L-aspartate is bound at residue lysine 86. Arginine 108, histidine 137, and glutamine 140 together coordinate carbamoyl phosphate. The L-aspartate site is built by arginine 170 and arginine 225. 2 residues coordinate carbamoyl phosphate: glycine 264 and proline 265.

The protein belongs to the aspartate/ornithine carbamoyltransferase superfamily. ATCase family. Heterododecamer (2C3:3R2) of six catalytic PyrB chains organized as two trimers (C3), and six regulatory PyrI chains organized as three dimers (R2).

It carries out the reaction carbamoyl phosphate + L-aspartate = N-carbamoyl-L-aspartate + phosphate + H(+). It participates in pyrimidine metabolism; UMP biosynthesis via de novo pathway; (S)-dihydroorotate from bicarbonate: step 2/3. Functionally, catalyzes the condensation of carbamoyl phosphate and aspartate to form carbamoyl aspartate and inorganic phosphate, the committed step in the de novo pyrimidine nucleotide biosynthesis pathway. This chain is Aspartate carbamoyltransferase catalytic subunit, found in Coxiella burnetii (strain CbuG_Q212) (Coxiella burnetii (strain Q212)).